The sequence spans 156 residues: ATP synthase subunit b (156 aa).

A helical membrane pass occupies residues 7–29; the sequence is LIGQSLTFIAFILFCMKYVWPQL.

This sequence belongs to the ATPase B chain family. As to quaternary structure, F-type ATPases have 2 components, F(1) - the catalytic core - and F(0) - the membrane proton channel. F(1) has five subunits: alpha(3), beta(3), gamma(1), delta(1), epsilon(1). F(0) has three main subunits: a(1), b(2) and c(10-14). The alpha and beta chains form an alternating ring which encloses part of the gamma chain. F(1) is attached to F(0) by a central stalk formed by the gamma and epsilon chains, while a peripheral stalk is formed by the delta and b chains.

The protein resides in the cell inner membrane. In terms of biological role, f(1)F(0) ATP synthase produces ATP from ADP in the presence of a proton or sodium gradient. F-type ATPases consist of two structural domains, F(1) containing the extramembraneous catalytic core and F(0) containing the membrane proton channel, linked together by a central stalk and a peripheral stalk. During catalysis, ATP synthesis in the catalytic domain of F(1) is coupled via a rotary mechanism of the central stalk subunits to proton translocation. Component of the F(0) channel, it forms part of the peripheral stalk, linking F(1) to F(0). The chain is ATP synthase subunit b from Saccharophagus degradans (strain 2-40 / ATCC 43961 / DSM 17024).